Reading from the N-terminus, the 195-residue chain is 3-isopropylmalate dehydratase small subunit (195 aa).

It belongs to the LeuD family. LeuD type 1 subfamily. Heterodimer of LeuC and LeuD.

The enzyme catalyses (2R,3S)-3-isopropylmalate = (2S)-2-isopropylmalate. It functions in the pathway amino-acid biosynthesis; L-leucine biosynthesis; L-leucine from 3-methyl-2-oxobutanoate: step 2/4. Catalyzes the isomerization between 2-isopropylmalate and 3-isopropylmalate, via the formation of 2-isopropylmaleate. The protein is 3-isopropylmalate dehydratase small subunit of Salinispora tropica (strain ATCC BAA-916 / DSM 44818 / JCM 13857 / NBRC 105044 / CNB-440).